A 34-amino-acid chain; its full sequence is Protein HRURF (34 aa).

Its function is as follows. May function as an inhibitory translational control element that can negatively regulate protein translation of HR gene. The chain is Protein HRURF from Homo sapiens (Human).